Consider the following 147-residue polypeptide: Phospholipase A2-beta (147 aa).

Positions 1 to 28 are cleaved as a signal peptide; sequence MMFRTSLMRFAAAFFAIVFVVLVGVARS. Cystine bridges form between cysteine 31-cysteine 58, cysteine 35-cysteine 64, cysteine 40-cysteine 117, cysteine 51-cysteine 71, cysteine 70-cysteine 95, and cysteine 77-cysteine 88. Residues tyrosine 50, glycine 52, and histidine 55 each coordinate Ca(2+). Histidine 74 is a catalytic residue. Aspartate 75 is a Ca(2+) binding site. Positions 144–147 match the Prevents secretion from ER motif; that stretch reads KTEL.

This sequence belongs to the phospholipase A2 family. Ca(2+) is required as a cofactor. Ubiquitous but expressed at a low level. Detected in vascular tissues and in the guard cells. Predominantly detected in pollen.

The protein localises to the secreted. It localises to the endoplasmic reticulum. It carries out the reaction a 1,2-diacyl-sn-glycero-3-phosphocholine + H2O = a 1-acyl-sn-glycero-3-phosphocholine + a fatty acid + H(+). Its activity is regulated as follows. Inhibited by aristolochic acid. In terms of biological role, PA2 catalyzes the calcium-dependent hydrolysis of the 2-acyl groups in 3-sn-phosphoglycerides. Releases lysophospholipids (LPLs) and free fatty acids (FFAs) from membrane phospholipids in response to hormones and other external stimuli. Regulates the process of cell elongation and plays important roles in shoot gravitropism by mediating auxin-induced cell elongation. Involved in stomatal opening in response to light. Plays a role in pollen development and germination and tube growth. The sequence is that of Phospholipase A2-beta (PLA2-BETA) from Arabidopsis thaliana (Mouse-ear cress).